A 32-amino-acid chain; its full sequence is Photosystem II reaction center protein T (32 aa).

Residues 3–23 (ALVYTFLLIGTLIVIFFAVFF) traverse the membrane as a helical segment.

It belongs to the PsbT family. As to quaternary structure, PSII is composed of 1 copy each of membrane proteins PsbA, PsbB, PsbC, PsbD, PsbE, PsbF, PsbH, PsbI, PsbJ, PsbK, PsbL, PsbM, PsbT, PsbX, PsbY, PsbZ, Psb30/Ycf12, at least 3 peripheral proteins of the oxygen-evolving complex and a large number of cofactors. It forms dimeric complexes.

It is found in the plastid. It localises to the chloroplast thylakoid membrane. Functionally, found at the monomer-monomer interface of the photosystem II (PS II) dimer, plays a role in assembly and dimerization of PSII. PSII is a light-driven water plastoquinone oxidoreductase, using light energy to abstract electrons from H(2)O, generating a proton gradient subsequently used for ATP formation. The polypeptide is Photosystem II reaction center protein T (Phaeodactylum tricornutum (strain CCAP 1055/1)).